Reading from the N-terminus, the 100-residue chain is Transcription and mRNA export factor SUS1 (100 aa).

The protein belongs to the ENY2 family. Component of the nuclear pore complex (NPC)-associated TREX-2 complex (transcription and export complex 2), composed of at least SUS1, SAC3, THP1, SEM1, and CDC31. TREX-2 contains 2 SUS1 chains. The TREX-2 complex interacts with the nucleoporin NUP1. Component of the 1.8 MDa SAGA transcription coactivator-HAT complex. SAGA is built of 5 distinct domains with specialized functions. Within the SAGA complex, SUS1, SGF11, SGF73 and UBP8 form an additional subcomplex of SAGA called the DUB module (deubiquitination module). Interacts directly with THP1, SAC3, SGF11, and with the RNA polymerase II.

The protein localises to the nucleus. The protein resides in the nucleoplasm. It localises to the cytoplasm. Its subcellular location is the P-body. Functionally, involved in mRNA export coupled transcription activation by association with both the TREX-2 and the SAGA complexes. At the promoters, SAGA is required for recruitment of the basal transcription machinery. It influences RNA polymerase II transcriptional activity through different activities such as TBP interaction and promoter selectivity, interaction with transcription activators, and chromatin modification through histone acetylation and deubiquitination. Within the SAGA complex, participates in a subcomplex required for deubiquitination of H2B and for the maintenance of steady-state H3 methylation levels. The TREX-2 complex functions in docking export-competent ribonucleoprotein particles (mRNPs) to the nuclear entrance of the nuclear pore complex (nuclear basket). TREX-2 participates in mRNA export and accurate chromatin positioning in the nucleus by tethering genes to the nuclear periphery. May also be involved in cytoplasmic mRNA decay by interaction with components of P-bodies. The sequence is that of Transcription and mRNA export factor SUS1 from Candida glabrata (strain ATCC 2001 / BCRC 20586 / JCM 3761 / NBRC 0622 / NRRL Y-65 / CBS 138) (Yeast).